A 537-amino-acid polypeptide reads, in one-letter code: O-phosphoserine--tRNA(Cys) ligase (537 aa).

Substrate is bound by residues 186 to 188 (HMT), 231 to 233 (SAS), 273 to 274 (YY), and Asn-317.

The protein belongs to the class-II aminoacyl-tRNA synthetase family. O-phosphoseryl-tRNA(Cys) synthetase subfamily. As to quaternary structure, homotetramer. Interacts with SepCysS.

It catalyses the reaction tRNA(Cys) + O-phospho-L-serine + ATP = O-phospho-L-seryl-tRNA(Cys) + AMP + diphosphate. Catalyzes the attachment of O-phosphoserine (Sep) to tRNA(Cys). This chain is O-phosphoserine--tRNA(Cys) ligase, found in Methanococcus maripaludis (strain DSM 14266 / JCM 13030 / NBRC 101832 / S2 / LL).